Consider the following 458-residue polypeptide: UDP-N-acetylmuramoylalanine--D-glutamate ligase (458 aa).

An ATP-binding site is contributed by 124–130 (GSDGKTT).

The protein belongs to the MurCDEF family.

It is found in the cytoplasm. The enzyme catalyses UDP-N-acetyl-alpha-D-muramoyl-L-alanine + D-glutamate + ATP = UDP-N-acetyl-alpha-D-muramoyl-L-alanyl-D-glutamate + ADP + phosphate + H(+). It participates in cell wall biogenesis; peptidoglycan biosynthesis. Cell wall formation. Catalyzes the addition of glutamate to the nucleotide precursor UDP-N-acetylmuramoyl-L-alanine (UMA). This chain is UDP-N-acetylmuramoylalanine--D-glutamate ligase, found in Clostridium botulinum (strain ATCC 19397 / Type A).